Consider the following 234-residue polypeptide: BTB/POZ domain-containing protein KCTD5 (234 aa).

N-acetylalanine is present on alanine 2. The BTB domain maps to 44–146; that stretch reads KWVRLNVGGT…LVKDKIRERD (103 aa). Residues 213 to 234 form a disordered region; that stretch reads PYGTTSEPSEKAKILQERGSRM. A compositionally biased stretch (basic and acidic residues) spans 220–234; sequence PSEKAKILQERGSRM.

Homopentamer. Interacts (via C-terminus) with GRASP55/GORASP2. Interacts with CUL3 and with ubiquitinated proteins. Interacts with CRY1.

The protein resides in the cytoplasm. It localises to the cytosol. The protein localises to the nucleus. Its function is as follows. Its interaction with CUL3 suggests that it may act as a substrate adapter in some E3 ligase complex. Does not affect the function of Kv channel Kv2.1/KCNB1, Kv1.2/KCNA2, Kv4.2/KCND2 and Kv3.4/KCNC4. This is BTB/POZ domain-containing protein KCTD5 (Kctd5) from Rattus norvegicus (Rat).